Consider the following 281-residue polypeptide: Probable endonuclease 4 (281 aa).

9 residues coordinate Zn(2+): His69, His109, Glu145, Asp179, His182, His216, Asp229, His231, and Glu261.

The protein belongs to the AP endonuclease 2 family. It depends on Zn(2+) as a cofactor.

The enzyme catalyses Endonucleolytic cleavage to 5'-phosphooligonucleotide end-products.. In terms of biological role, endonuclease IV plays a role in DNA repair. It cleaves phosphodiester bonds at apurinic or apyrimidinic (AP) sites, generating a 3'-hydroxyl group and a 5'-terminal sugar phosphate. This Parabacteroides distasonis (strain ATCC 8503 / DSM 20701 / CIP 104284 / JCM 5825 / NCTC 11152) protein is Probable endonuclease 4.